Reading from the N-terminus, the 904-residue chain is E3 SUMO-protein ligase SIZ1 (904 aa).

Acidic residues predominate over residues 1 to 13 (MINLEDYWEDETP). The interval 1–21 (MINLEDYWEDETPGPDREPTN) is disordered. Positions 34 to 68 (MELLKVSELKDICRSVSFPVSGRKAVLQDLIRNFL) constitute an SAP domain. Residues 122-170 (MEGPPTVQQQSPSVIRQSPTQRRKTSTTSSTSRAPPPTNPDASSSSSSF) form a disordered region. Polar residues predominate over residues 127-136 (TVQQQSPSVI). Phosphoserine is present on S132. Residues 137-154 (RQSPTQRRKTSTTSSTSR) show a composition bias toward low complexity. The PINIT domain occupies 162–314 (DASSSSSSFA…KLFGYIVEMI (153 aa)). The SP-RING-type zinc-finger motif lies at 344–431 (EDEEMGLTTT…LQNCQKNVEQ (88 aa)). Residues C377, H379, C400, and C403 each contribute to the Zn(2+) site. Disordered stretches follow at residues 443–584 (ILED…DDDR), 596–616 (STNT…TLDP), and 672–733 (SPDV…ISDS). Acidic residues predominate over residues 444 to 454 (LEDDDDSDSDS). The span at 501–511 (NNHDDSNRHSN) shows a compositional bias: basic and acidic residues. The segment covering 512–553 (DNNNNSIKNNDSHNKNNNNNNNNNNNNNDNNNSIENNDSNSN) has biased composition (low complexity). Composition is skewed to polar residues over residues 561 to 574 (RSNT…KNLM), 596 to 611 (STNT…SAPS), and 672 to 683 (SPDVSVSSPTPR). A compositionally biased stretch (low complexity) spans 684–699 (NTASNASSSALSTPPL). Residues 721–733 (INSNSYTASISDS) show a composition bias toward polar residues. Phosphoserine is present on S794. Positions 794 to 904 (SLPTTEAITR…QDYGKKYNSG (111 aa)) are required for localization at the bud neck. Positions 877-894 (RQLSNTSSTSPIMGTWKT) are enriched in polar residues. The segment at 877-904 (RQLSNTSSTSPIMGTWKTQDYGKKYNSG) is disordered.

It belongs to the PIAS family. In terms of assembly, interacts with UBC9 and CDC3. Phosphorylated in early M-phase. Post-translationally, autosumoylated upon ethanol stress.

It localises to the cytoplasm. The protein localises to the nucleus. The protein resides in the bud neck. Its pathway is protein modification; protein sumoylation. Acts as an E3 ligase mediating SUMO/Smt3 attachment to septins and PCNA. May be involved in chromosome maintenance. In Saccharomyces cerevisiae (strain ATCC 204508 / S288c) (Baker's yeast), this protein is E3 SUMO-protein ligase SIZ1 (SIZ1).